We begin with the raw amino-acid sequence, 556 residues long: WD repeat-containing protein srw1 (556 aa).

Residues Met-1–Arg-80 form a disordered region. Low complexity predominate over residues Ser-12 to Ser-37. The span at Ser-43–Phe-55 shows a compositional bias: basic and acidic residues. The residue at position 62 (Ser-62) is a Phosphoserine. The span at Arg-69 to Pro-78 shows a compositional bias: basic and acidic residues. Thr-98 carries the phosphothreonine modification. The segment covering Thr-126 to Thr-146 has biased composition (polar residues). A disordered region spans residues Thr-126 to Asn-173. Positions Thr-159 to Ser-169 are enriched in low complexity. Residue Thr-177 is modified to Phosphothreonine. Ser-187 and Ser-214 each carry phosphoserine. WD repeat units lie at residues Gly-246–Met-285, Tyr-289–Thr-328, Gly-331–Arg-368, Ala-372–Ser-411, Asn-414–Asn-456, Asp-458–Thr-499, and Gly-502–Ser-541.

This sequence belongs to the WD repeat CDC20/Fizzy family. In terms of processing, phosphorylated by cdc2-cdc13-CDK complex. This targets srw1 for proteolysis which in turn promotes cdc13 turnover. Dephosphorylated during G1 arrest.

It localises to the nucleus. Its function is as follows. Has a role in cell differentiation and cell cycling by negatively regulating cig2 and cdc12-associated cdc2. Down-regulates the level of cdc13, particularly in a nitrogen deprived environment. Regulator of cell cycle G1 phase progression. Prevents onset of mitosis during the pre-Start G1 period. Required for degradation of cdc13 mitotic cyclin B during G1 arrest but not during mitotic exit. In Schizosaccharomyces pombe (strain 972 / ATCC 24843) (Fission yeast), this protein is WD repeat-containing protein srw1 (srw1).